The sequence spans 36 residues: Peptide POLARIS (36 aa).

It belongs to the POLARIS peptide family. In terms of tissue distribution, mostly expressed in the embryonic root from the heart stage and in the seedling primary and lateral root tips, especially in the columella initials and lateral root cap. Also detectable in aerial parts of the seedling, sepals and leaves, principally in vascular tissues of the lamina and petiole.

Its function is as follows. Required for correct root growth and vascular development, probably by modulating both cell division rate in meristems and cell elongation in roots. Negative regulator of the ethylene signaling pathway that modulates microtubule cytoskeleton dynamics and auxin transport and homeostasis, and possibly cytokinin signaling, thus influencing root growth and lateral root development. This Arabidopsis thaliana (Mouse-ear cress) protein is Peptide POLARIS (PLS).